Reading from the N-terminus, the 311-residue chain is Probable manganese-dependent inorganic pyrophosphatase (311 aa).

Mn(2+) contacts are provided by H9, D13, D15, D77, H99, and D151.

This sequence belongs to the PPase class C family. It depends on Mn(2+) as a cofactor.

The protein localises to the cytoplasm. The enzyme catalyses diphosphate + H2O = 2 phosphate + H(+). The chain is Probable manganese-dependent inorganic pyrophosphatase from Streptococcus equi subsp. equi (strain 4047).